A 394-amino-acid polypeptide reads, in one-letter code: Phosphopentomutase (394 aa).

The Mn(2+) site is built by Asp13, Asp286, His291, Asp327, His328, and His339.

This sequence belongs to the phosphopentomutase family. It depends on Mn(2+) as a cofactor.

It is found in the cytoplasm. The enzyme catalyses 2-deoxy-alpha-D-ribose 1-phosphate = 2-deoxy-D-ribose 5-phosphate. It carries out the reaction alpha-D-ribose 1-phosphate = D-ribose 5-phosphate. The protein operates within carbohydrate degradation; 2-deoxy-D-ribose 1-phosphate degradation; D-glyceraldehyde 3-phosphate and acetaldehyde from 2-deoxy-alpha-D-ribose 1-phosphate: step 1/2. Isomerase that catalyzes the conversion of deoxy-ribose 1-phosphate (dRib-1-P) and ribose 1-phosphate (Rib-1-P) to deoxy-ribose 5-phosphate (dRib-5-P) and ribose 5-phosphate (Rib-5-P), respectively. This Bacillus cereus (strain AH187) protein is Phosphopentomutase.